Consider the following 114-residue polypeptide: PDZK1-interacting protein 1 (114 aa).

Topologically, residues 1–28 (MSAFGLLILGLLTAVPPASCRQGLGNLQ) are extracellular. The helical transmembrane segment at 29-51 (PWMQGLIAVAVFLVLVAIAFAVN) threads the bilayer. Topologically, residues 52-114 (HFWCQEEPEP…EEGKVRSTPM (63 aa)) are cytoplasmic. At Ser-85 the chain carries Phosphoserine. The tract at residues 95–114 (HENAYENVPEEEGKVRSTPM) is disordered. Basic and acidic residues predominate over residues 105–114 (EEGKVRSTPM).

It belongs to the PDZK1-interacting protein 1/SMIM24 family. Forms a heterodimer (via N-terminal transmembrane helix) with SLC5A2/SGLT2 (via TM13); this interaction enhances SLC5A2 transporter activity. Interacts with PDZK1.

It is found in the apical cell membrane. In terms of biological role, auxiliary protein of electrogenic Na(+)-coupled sugar symporter SLC5A2/SGLT2 and SLC5A1/SGLT1. Essential for the transporter activity of SLC5A2/SGLT2 but not SLC5A1/SGLT1. In Pongo abelii (Sumatran orangutan), this protein is PDZK1-interacting protein 1.